Here is a 246-residue protein sequence, read N- to C-terminus: 2-C-methyl-D-erythritol 4-phosphate cytidylyltransferase (246 aa).

This sequence belongs to the IspD/TarI cytidylyltransferase family. IspD subfamily.

The catalysed reaction is 2-C-methyl-D-erythritol 4-phosphate + CTP + H(+) = 4-CDP-2-C-methyl-D-erythritol + diphosphate. The protein operates within isoprenoid biosynthesis; isopentenyl diphosphate biosynthesis via DXP pathway; isopentenyl diphosphate from 1-deoxy-D-xylulose 5-phosphate: step 2/6. Functionally, catalyzes the formation of 4-diphosphocytidyl-2-C-methyl-D-erythritol from CTP and 2-C-methyl-D-erythritol 4-phosphate (MEP). In Chlorobaculum tepidum (strain ATCC 49652 / DSM 12025 / NBRC 103806 / TLS) (Chlorobium tepidum), this protein is 2-C-methyl-D-erythritol 4-phosphate cytidylyltransferase.